We begin with the raw amino-acid sequence, 279 residues long: Odontogenic ameloblast-associated protein (279 aa).

The N-terminal stretch at 1–15 (MKIIILLGFLGATLS) is a signal peptide. T115 and T119 each carry an O-linked (GalNAc...) threonine glycan. Residues 127-129 (MPY) are interaction with ARHGEF5. Over residues 243-263 (STSPKPSTTNVFTSAVDQTIT) the composition is skewed to polar residues. Residues 243–279 (STSPKPSTTNVFTSAVDQTITPELPEEKDKTDSLREP) form a disordered region. T244 carries an O-linked (GalNAc...) threonine glycan. S249 carries an O-linked (GalNAc...) serine glycan. T250, T251, and T255 each carry an O-linked (GalNAc...) threonine glycan. Residue S256 is glycosylated (O-linked (GalNAc...) serine). 3 O-linked (GalNAc...) threonine glycosylation sites follow: T261, T263, and T273. A compositionally biased stretch (basic and acidic residues) spans 267-279 (PEEKDKTDSLREP). S275 carries an O-linked (GalNAc...) serine glycan.

It belongs to the ODAM family. As to quaternary structure, interacts (via C-terminus) with ARHGEF5. Post-translationally, O-glycosylated. As to expression, expressed in the junctional epithelium of healthy teeth. In periodontitis, absent in the pocket epithelium of the diseased periodontium but is detected in the gingival crevicular fluid.

The protein resides in the secreted. Its subcellular location is the cytoplasm. It localises to the nucleus. In terms of biological role, tooth-associated epithelia protein that probably plays a role in odontogenesis, the complex process that results in the initiation and generation of the tooth. May be incorporated in the enamel matrix at the end of mineralization process. Involved in the induction of RHOA activity via interaction with ARHGEF and expression of downstream factors such as ROCK. Plays a role in attachment of the junctional epithelium to the tooth surface. The polypeptide is Odontogenic ameloblast-associated protein (ODAM) (Homo sapiens (Human)).